Consider the following 648-residue polypeptide: MTECFLPPSSSPSEHRRAEHGSGLTRTPSSEEISPTKFPGLYRTGEPSPPHDVLHEPPDTVSDDDKDHGKKKGKFKKKEKRTEGYAAFQEDSSGDEAESPSKVKRSKGIHVFKKPSFSKKKEKDFKIKEKPKEEKHKEEKHKEEKHKEKKSKDLTAADVVKQWKEKKKKKKPIQEPEVPQMDAPSVKPIFGVPLVDAVERTMMYDGVRLPAVFRECVDYMEKHGMKCEGVYRVSGIKSKVDELKAAYDREESPNLEEYEPNTVASLLKQYLRDLPENLLTKELMPRFEEACGKTTEMEKVQEFQRLLRELPECNHLLLSWLIVHLDHVIAKELETKMNIQNISIVLSPTVQISNRVLYVLFTHVQELFGTVVLKQVTRPLRWSNMATMPTLPETQAGIKEEIRRQEFLLNCLHRDLQGGIKDLSKEERLWEVQRILTALKRKLREAKRQECETKIAQEIASLSKEDVSKEEMNENEEVINILLAQENEILTEQEELLAMEQFLRRQIASEKEEIDRLRAEIAEIQSRQQHGRSETEEYSSDSESESEDEEELQLILEDLQRQNEELEIKNNHLNQAVHEEREAIIELRVQLRLLQMQRAKSEQQPQEEEEPERRGGIGPPPCDGVLEVRVAKEQAKASPSKDRKETPI.

The segment at 1 to 158 (MTECFLPPSS…KKSKDLTAAD (158 aa)) is disordered. N-acetylthreonine is present on threonine 2. The segment covering 24 to 33 (LTRTPSSEEI) has biased composition (polar residues). Phosphoserine is present on residues serine 29, serine 30, and serine 34. At threonine 44 the chain carries Phosphothreonine. A phosphoserine mark is found at serine 48 and serine 62. Basic and acidic residues predominate over residues 52–68 (DVLHEPPDTVSDDDKDH). 69–74 (GKKKGK) lines the ATP pocket. A compositionally biased stretch (basic residues) spans 69-79 (GKKKGKFKKKE). 2 positions are modified to phosphoserine: serine 92 and serine 93. The span at 102-118 (KVKRSKGIHVFKKPSFS) shows a compositional bias: basic residues. The nuclear localization signal stretch occupies residues 102-119 (KVKRSKGIHVFKKPSFSK). Residues 119-155 (KKKEKDFKIKEKPKEEKHKEEKHKEEKHKEKKSKDLT) are compositionally biased toward basic and acidic residues. The interval 154-219 (LTAADVVKQW…PAVFRECVDY (66 aa)) is mediates association with membranes and could form transmembrane domains. Positions 192–380 (VPLVDAVERT…VVLKQVTRPL (189 aa)) constitute a Rho-GAP domain. The mediates interaction with RALA and RALB stretch occupies residues 403–499 (RRQEFLLNCL…LTEQEELLAM (97 aa)). An ATP-binding site is contributed by 418 to 425 (GGIKDLSK). Residues serine 461 and serine 463 each carry the phosphoserine modification. A mediates interaction with REPS1 and REPS2 region spans residues 500-648 (EQFLRRQIAS…PSKDRKETPI (149 aa)). Disordered regions lie at residues 525-552 (QSRQ…EEEL) and 598-648 (RAKS…ETPI). Residues 536 to 552 (EEYSSDSESESEDEEEL) are compositionally biased toward acidic residues. Over residues 629-648 (RVAKEQAKASPSKDRKETPI) the composition is skewed to basic and acidic residues. Serine 638 is subject to Phosphoserine.

As to quaternary structure, interacts with the GTP-bound form of RALA (via effector domain); during mitosis, recruits RALBP1 to the mitochondrion where it promotes DNM1L phosphorylation and mitochondrial fission. Interacts with DNM1L; mediates its mitotic kinase cyclin B-CDK1-mediated phosphorylation during mitosis to promote mitochondrial fission. Interacts with the mitotic kinase cyclin B-CDK1 during mitosis. Interacts with the GTP-bound form of RALB (via effector domain). Interacts with REPS1; the interaction is direct and does not affect RALA-binding nor GTPase activator activity of RALBP1. Interacts with REPS2; the interaction is direct and does not affect RALA-binding nor GTPase activator activity of RALBP1. Interacts with EPN1, NUMB and TFAP2A during interphase and mitosis. Interacts with AP2M1; as part of the AP2 complex. Interacts with CDC42. Interacts with RAC1. Tyrosine-phosphorylated upon stimulation of cells with EGF. Post-translationally, may undergo proteolytic cleavage to give peptides which reassemble to form a transporter complex. Ubiquitous. The highest level of expression was observed in ovaries and skeletal muscle, whereas the lowest was found in spleen, liver and peripheral blood leukocytes.

It localises to the cell membrane. The protein resides in the cytoplasm. It is found in the cytosol. Its subcellular location is the cytoskeleton. The protein localises to the spindle pole. It localises to the nucleus. The protein resides in the mitochondrion. It catalyses the reaction an S-substituted glutathione(in) + ATP + H2O = an S-substituted glutathione(out) + ADP + phosphate + H(+). The catalysed reaction is ATP + H2O + xenobioticSide 1 = ADP + phosphate + xenobioticSide 2.. It carries out the reaction leukotriene C4(in) + ATP + H2O = leukotriene C4(out) + ADP + phosphate + H(+). Functionally, multifunctional protein that functions as a downstream effector of RALA and RALB. As a GTPase-activating protein/GAP can inactivate CDC42 and RAC1 by stimulating their GTPase activity. As part of the Ral signaling pathway, may also regulate ligand-dependent EGF and insulin receptors-mediated endocytosis. During mitosis, may act as a scaffold protein in the phosphorylation of EPSIN/EPN1 by the mitotic kinase cyclin B-CDK1, preventing endocytosis during that phase of the cell cycle. During mitosis, also controls mitochondrial fission as an effector of RALA. Recruited to mitochondrion by RALA, acts as a scaffold to foster the mitotic kinase cyclin B-CDK1-mediated phosphorylation and activation of DNM1L. Its function is as follows. Could also function as a primary ATP-dependent active transporter for glutathione conjugates of electrophiles. May also actively catalyze the efflux of a wide range of substrates including xenobiotics like doxorubicin (DOX) contributing to cell multidrug resistance. The polypeptide is RalA-binding protein 1 (Mus musculus (Mouse)).